Here is a 299-residue protein sequence, read N- to C-terminus: ATP phosphoribosyltransferase (299 aa).

It belongs to the ATP phosphoribosyltransferase family. Long subfamily. Equilibrium between an active dimeric form, an inactive hexameric form and higher aggregates. Interconversion between the various forms is largely reversible and is influenced by the natural substrates and inhibitors of the enzyme. It depends on Mg(2+) as a cofactor.

Its subcellular location is the cytoplasm. The catalysed reaction is 1-(5-phospho-beta-D-ribosyl)-ATP + diphosphate = 5-phospho-alpha-D-ribose 1-diphosphate + ATP. It functions in the pathway amino-acid biosynthesis; L-histidine biosynthesis; L-histidine from 5-phospho-alpha-D-ribose 1-diphosphate: step 1/9. Its activity is regulated as follows. Feedback inhibited by histidine. In terms of biological role, catalyzes the condensation of ATP and 5-phosphoribose 1-diphosphate to form N'-(5'-phosphoribosyl)-ATP (PR-ATP). Has a crucial role in the pathway because the rate of histidine biosynthesis seems to be controlled primarily by regulation of HisG enzymatic activity. The protein is ATP phosphoribosyltransferase of Salmonella choleraesuis (strain SC-B67).